A 453-amino-acid polypeptide reads, in one-letter code: Lysine histidine transporter-like 1 (453 aa).

Residues 1 to 44 (MYIQMTDGVPPPPEQSSLDHRIDELERQKEIDDWLPITSSRNAK) are Cytoplasmic-facing. 2 helical membrane passes run 45 to 65 (WWYS…LGLP) and 66 to 86 (FFMA…SWII). Residues 87–122 (TLYTLWQMVEMHEMVPGKRFDRYHELGQFAFGERLG) lie on the Cytoplasmic side of the membrane. The helical transmembrane segment at 123 to 143 (LYIIVPQQIIVEVGVCIVYMV) threads the bilayer. The Extracellular portion of the chain corresponds to 144–164 (TGGQSLKKFHEIACQDCSPIR). Residues 165–185 (LSFFIMIFASSHFVLSHLPNF) traverse the membrane as a helical segment. Over 186–187 (NS) the chain is Cytoplasmic. A helical membrane pass occupies residues 188–208 (ISGVSLVAAVMSLSYSTIAWT). Over 209-231 (ATAAKGVQEDVQYGYKSGTTAST) the chain is Extracellular. A helical transmembrane segment spans residues 232–252 (VLSFFTGLGGIAFAYAGHNVV). Over 253-276 (LEIQATIPSTPSNPSKGPMWRGVV) the chain is Cytoplasmic. Residues 277–297 (VAYVVVALCYFPVALVGYGVF) traverse the membrane as a helical segment. Residues 298–318 (GNAVLDNVLMSLETPVWAIAT) lie on the Extracellular side of the membrane. The helical transmembrane segment at 319–339 (ANLFVVMHVIGSYQIFAMPVF) threads the bilayer. The Cytoplasmic portion of the chain corresponds to 340–359 (DMVETFLVKKLNFKPSTVLR). The helical transmembrane segment at 360–382 (FIVRNVYVALTMFIGIMIPFFGG) threads the bilayer. Residues 383–385 (LLA) are Extracellular-facing. A helical transmembrane segment spans residues 386–408 (FFGGFAFAPTSYFLPCIMWLLIY). Residues 409-412 (KPKR) lie on the Cytoplasmic side of the membrane. The chain crosses the membrane as a helical span at residues 413–433 (FSLSWWTNWVCIVLGVVLMIL). The Extracellular portion of the chain corresponds to 434–453 (SSIGGLRQIIIQSKDYSFFS).

The protein belongs to the amino acid/polyamine transporter 2 family. Amino acid/auxin permease (AAAP) (TC 2.A.18.2) subfamily.

It localises to the cell membrane. Amino acid transporter. In Arabidopsis thaliana (Mouse-ear cress), this protein is Lysine histidine transporter-like 1.